A 475-amino-acid chain; its full sequence is Aspartyl/glutamyl-tRNA(Asn/Gln) amidotransferase subunit B (475 aa).

This sequence belongs to the GatB/GatE family. GatB subfamily. Heterotrimer of A, B and C subunits.

The enzyme catalyses L-glutamyl-tRNA(Gln) + L-glutamine + ATP + H2O = L-glutaminyl-tRNA(Gln) + L-glutamate + ADP + phosphate + H(+). The catalysed reaction is L-aspartyl-tRNA(Asn) + L-glutamine + ATP + H2O = L-asparaginyl-tRNA(Asn) + L-glutamate + ADP + phosphate + 2 H(+). In terms of biological role, allows the formation of correctly charged Asn-tRNA(Asn) or Gln-tRNA(Gln) through the transamidation of misacylated Asp-tRNA(Asn) or Glu-tRNA(Gln) in organisms which lack either or both of asparaginyl-tRNA or glutaminyl-tRNA synthetases. The reaction takes place in the presence of glutamine and ATP through an activated phospho-Asp-tRNA(Asn) or phospho-Glu-tRNA(Gln). This is Aspartyl/glutamyl-tRNA(Asn/Gln) amidotransferase subunit B from Chlorobium phaeobacteroides (strain DSM 266 / SMG 266 / 2430).